We begin with the raw amino-acid sequence, 249 residues long: 4-hydroxy-tetrahydrodipicolinate reductase (249 aa).

NAD(+)-binding positions include 77–79 (ATT) and 101–104 (SYNT). The active-site Proton donor/acceptor is His-133. His-134 is a binding site for (S)-2,3,4,5-tetrahydrodipicolinate. Lys-137 serves as the catalytic Proton donor. 143–144 (GT) lines the (S)-2,3,4,5-tetrahydrodipicolinate pocket.

Belongs to the DapB family.

It is found in the cytoplasm. The catalysed reaction is (S)-2,3,4,5-tetrahydrodipicolinate + NAD(+) + H2O = (2S,4S)-4-hydroxy-2,3,4,5-tetrahydrodipicolinate + NADH + H(+). The enzyme catalyses (S)-2,3,4,5-tetrahydrodipicolinate + NADP(+) + H2O = (2S,4S)-4-hydroxy-2,3,4,5-tetrahydrodipicolinate + NADPH + H(+). Its pathway is amino-acid biosynthesis; L-lysine biosynthesis via DAP pathway; (S)-tetrahydrodipicolinate from L-aspartate: step 4/4. Catalyzes the conversion of 4-hydroxy-tetrahydrodipicolinate (HTPA) to tetrahydrodipicolinate. This Exiguobacterium sp. (strain ATCC BAA-1283 / AT1b) protein is 4-hydroxy-tetrahydrodipicolinate reductase.